Consider the following 318-residue polypeptide: Ankyrin repeat domain-containing protein 1 (318 aa).

A coiled-coil region spans residues 37-77; the sequence is ALEKQEDLKTTSKSLIELEEEKQIKEKQLKSELLKKKLEER. 6 ANK repeats span residues 118-147, 151-180, 184-213, 217-246, 250-279, and 283-314; these read VDQTTFFKAALDNKMPVIEKYLADGGDPNT, YKRTALHRACSEGHTDMVEKLIEAGANIEF, LESTALHWTCRGGSVETLKLLLNKGAAINA, LLSTPLHVAVRTGHYECAEHLIACEADLHA, EGDTPMHDGVRLNRYKMMRLLILYGVDLNI, and AGKTPMELVMQWQNGAKEIFNGLQSKSYKNSH.

It is found in the nucleus. Functionally, may act as a nuclear transcription factor that negatively regulates the expression of cardiac genes. The sequence is that of Ankyrin repeat domain-containing protein 1 (ankrd1) from Xenopus tropicalis (Western clawed frog).